Here is a 211-residue protein sequence, read N- to C-terminus: MRIHVVDHPLVAHKLTTLRDKRTDSPTFRRLADELVTLLAYEATRDVRTELVDIETPVTPTTGVKLSHPRPLVVPILRAGLGMLDGMVRLLPTAEVGFLGMIRNEETLKAETYATRMPEDLSGRQVYVLDPMLATGGTLVAAIRELIERGADDVTAVVLLAAPEGVEVMERELAGTPVTVVTASVDERLNENGYIVPGLGDAGDRMYGTAE.

5-phospho-alpha-D-ribose 1-diphosphate contacts are provided by residues R78, R103, and 130–138; that span reads DPMLATGGT. Uracil is bound by residues I195 and 200-202; that span reads GDA. D201 contributes to the 5-phospho-alpha-D-ribose 1-diphosphate binding site.

This sequence belongs to the UPRTase family. It depends on Mg(2+) as a cofactor.

The catalysed reaction is UMP + diphosphate = 5-phospho-alpha-D-ribose 1-diphosphate + uracil. It participates in pyrimidine metabolism; UMP biosynthesis via salvage pathway; UMP from uracil: step 1/1. Allosterically activated by GTP. Its function is as follows. Catalyzes the conversion of uracil and 5-phospho-alpha-D-ribose 1-diphosphate (PRPP) to UMP and diphosphate. This Streptomyces griseus subsp. griseus (strain JCM 4626 / CBS 651.72 / NBRC 13350 / KCC S-0626 / ISP 5235) protein is Uracil phosphoribosyltransferase.